A 109-amino-acid polypeptide reads, in one-letter code: Mitochondrial pyruvate carrier 1 (109 aa).

At Ala-2 the chain carries N-acetylalanine. At 2-20 (AGALVRKAADYVRSKDFRD) the chain is on the mitochondrial matrix side. The chain crosses the membrane as a helical span at residues 21–41 (YLMSTHFWGPVANWGLPIAAI). The Mitochondrial intermembrane portion of the chain corresponds to 42 to 52 (NDMKKSPEIIS). A helical membrane pass occupies residues 53–71 (GRMTFALCCYSLTFMRFAY). Lys-72 is subject to N6-acetyllysine. Topologically, residues 72–109 (KVQPRNWLLFACHVTNEVAQLIQGGRLINYEMSKRPSA) are mitochondrial matrix.

The protein belongs to the mitochondrial pyruvate carrier (MPC) (TC 2.A.105) family. In terms of assembly, homodimer. Forms heterodimer with MPC2. The heterodimer is the more stable and dominant form.

The protein resides in the mitochondrion inner membrane. The catalysed reaction is pyruvate(out) + H(+)(out) = pyruvate(in) + H(+)(in). Functionally, mediates the uptake of pyruvate into mitochondria. The polypeptide is Mitochondrial pyruvate carrier 1 (Mpc1) (Mus musculus (Mouse)).